Reading from the N-terminus, the 199-residue chain is FMN-dependent NADH:quinone oxidoreductase (199 aa).

FMN contacts are provided by residues Ser-10, 16–18 (SVS), and 96–99 (MYNF).

This sequence belongs to the azoreductase type 1 family. Homodimer. Requires FMN as cofactor.

It catalyses the reaction 2 a quinone + NADH + H(+) = 2 a 1,4-benzosemiquinone + NAD(+). It carries out the reaction N,N-dimethyl-1,4-phenylenediamine + anthranilate + 2 NAD(+) = 2-(4-dimethylaminophenyl)diazenylbenzoate + 2 NADH + 2 H(+). Functionally, quinone reductase that provides resistance to thiol-specific stress caused by electrophilic quinones. Also exhibits azoreductase activity. Catalyzes the reductive cleavage of the azo bond in aromatic azo compounds to the corresponding amines. The sequence is that of FMN-dependent NADH:quinone oxidoreductase from Azotobacter vinelandii (strain DJ / ATCC BAA-1303).